A 210-amino-acid polypeptide reads, in one-letter code: Meiotic coiled-coil protein 7 (210 aa).

A coiled-coil region spans residues 77 to 148; the sequence is KRSRESVLGS…LKTQLSNLNH (72 aa).

The protein belongs to the MND1 family. Interacts with meu13.

The protein localises to the cytoplasm. Its subcellular location is the nucleus. Its function is as follows. Required for meiotic recombination. The sequence is that of Meiotic coiled-coil protein 7 (mcp7) from Schizosaccharomyces pombe (strain 972 / ATCC 24843) (Fission yeast).